Here is a 474-residue protein sequence, read N- to C-terminus: Ankyrin repeat, SAM and basic leucine zipper domain-containing protein 1 (474 aa).

A disordered region spans residues M1 to R31. A phosphoserine mark is found at S16, S17, and S19. ANK repeat units lie at residues E43–S72, F76–F105, D108–A142, K146–A175, N179–L208, and D212–G241. Residues S270–Q333 enclose the SAM domain.

As to quaternary structure, interacts with DDX4, PIWIL1, RANBP9 and TDRD1.

Its subcellular location is the cytoplasm. Functionally, plays a central role during spermatogenesis by repressing transposable elements and preventing their mobilization, which is essential for the germline integrity. Acts via the piRNA metabolic process, which mediates the repression of transposable elements during meiosis by forming complexes composed of piRNAs and Piwi proteins and governs the methylation and subsequent repression of transposons. Its association with pi-bodies suggests a participation in the primary piRNAs metabolic process. Required prior to the pachytene stage to facilitate the production of multiple types of piRNAs, including those associated with repeats involved in the regulation of retrotransposons. May act by mediating protein-protein interactions during germ cell maturation. In Ornithorhynchus anatinus (Duckbill platypus), this protein is Ankyrin repeat, SAM and basic leucine zipper domain-containing protein 1 (ASZ1).